The chain runs to 361 residues: Anhydro-N-acetylmuramic acid kinase (361 aa).

G10 to D17 contacts ATP.

It belongs to the anhydro-N-acetylmuramic acid kinase family.

It catalyses the reaction 1,6-anhydro-N-acetyl-beta-muramate + ATP + H2O = N-acetyl-D-muramate 6-phosphate + ADP + H(+). It functions in the pathway amino-sugar metabolism; 1,6-anhydro-N-acetylmuramate degradation. It participates in cell wall biogenesis; peptidoglycan recycling. Catalyzes the specific phosphorylation of 1,6-anhydro-N-acetylmuramic acid (anhMurNAc) with the simultaneous cleavage of the 1,6-anhydro ring, generating MurNAc-6-P. Is required for the utilization of anhMurNAc either imported from the medium or derived from its own cell wall murein, and thus plays a role in cell wall recycling. The protein is Anhydro-N-acetylmuramic acid kinase of Gluconobacter oxydans (strain 621H) (Gluconobacter suboxydans).